The following is a 560-amino-acid chain: Glycolate permease GlcA (560 aa).

Topologically, residues Met-1 to Gly-13 are cytoplasmic. Residues Leu-14 to Val-34 traverse the membrane as a helical segment. Residues Leu-35–Val-41 lie on the Periplasmic side of the membrane. The chain crosses the membrane as a helical span at residues Ala-42–Ile-62. At Asp-63–Ala-69 the chain is on the cytoplasmic side. The chain crosses the membrane as a helical span at residues Gly-70–Leu-90. Topologically, residues Tyr-91–Glu-130 are periplasmic. Residues Gly-131 to Phe-151 form a helical membrane-spanning segment. The Cytoplasmic portion of the chain corresponds to Lys-152 to Gly-158. Residues Leu-159–Val-179 form a helical membrane-spanning segment. Topologically, residues Ala-180–Leu-199 are periplasmic. The chain crosses the membrane as a helical span at residues Pro-200 to Val-220. Residues Lys-221–Pro-225 are Cytoplasmic-facing. Residues Ala-226–Gly-246 form a helical membrane-spanning segment. The Periplasmic portion of the chain corresponds to Pro-247 to Glu-248. The chain crosses the membrane as a helical span at residues Leu-249 to Trp-269. Topologically, residues Arg-270 to Pro-313 are cytoplasmic. The helical transmembrane segment at Phe-314 to Ala-334 threads the bilayer. Residues Pro-335–Ser-378 lie on the Periplasmic side of the membrane. The chain crosses the membrane as a helical span at residues Ala-379–Ile-399. Residues Lys-400–Glu-408 lie on the Cytoplasmic side of the membrane. A helical transmembrane segment spans residues Thr-409–Val-429. The Periplasmic portion of the chain corresponds to Thr-430–Thr-438. The chain crosses the membrane as a helical span at residues Leu-439–Trp-459. At Leu-460 to Ser-536 the chain is on the cytoplasmic side. The helical transmembrane segment at Leu-537–Met-557 threads the bilayer. Residues Leu-558 to Ser-560 lie on the Periplasmic side of the membrane.

This sequence belongs to the lactate permease family.

It is found in the cell inner membrane. The enzyme catalyses glycolate(in) + H(+)(in) = glycolate(out) + H(+)(out). The catalysed reaction is (S)-lactate(in) + H(+)(in) = (S)-lactate(out) + H(+)(out). It carries out the reaction (R)-lactate(in) + H(+)(in) = (R)-lactate(out) + H(+)(out). Inhibited by the proton ionophore carbonyl cyanide m-chlorophenylhydrazone (CCCP). Its function is as follows. Uptake of glycolate across the membrane. Can also transport L-lactate and D-lactate. Seems to be driven by a proton motive force. This chain is Glycolate permease GlcA, found in Escherichia coli (strain K12).